We begin with the raw amino-acid sequence, 156 residues long: ATP synthase subunit b (156 aa).

Residues 12–32 (VAFFIFVLFCMKFVWPPVIAA) form a helical membrane-spanning segment.

Belongs to the ATPase B chain family. F-type ATPases have 2 components, F(1) - the catalytic core - and F(0) - the membrane proton channel. F(1) has five subunits: alpha(3), beta(3), gamma(1), delta(1), epsilon(1). F(0) has three main subunits: a(1), b(2) and c(10-14). The alpha and beta chains form an alternating ring which encloses part of the gamma chain. F(1) is attached to F(0) by a central stalk formed by the gamma and epsilon chains, while a peripheral stalk is formed by the delta and b chains.

The protein resides in the cell inner membrane. Its function is as follows. F(1)F(0) ATP synthase produces ATP from ADP in the presence of a proton or sodium gradient. F-type ATPases consist of two structural domains, F(1) containing the extramembraneous catalytic core and F(0) containing the membrane proton channel, linked together by a central stalk and a peripheral stalk. During catalysis, ATP synthesis in the catalytic domain of F(1) is coupled via a rotary mechanism of the central stalk subunits to proton translocation. In terms of biological role, component of the F(0) channel, it forms part of the peripheral stalk, linking F(1) to F(0). This Pseudomonas aeruginosa (strain UCBPP-PA14) protein is ATP synthase subunit b.